The following is a 197-amino-acid chain: Female-specific protein transformer (197 aa).

Basic and acidic residues-rich tracts occupy residues Met1 to Gly17 and Arg24 to Lys39. Disordered stretches follow at residues Met1–Ile136 and Gly158–Tyr197. Composition is skewed to basic residues over residues Arg58–Ser75 and Ser84–His127. The span at Pro163 to Pro172 shows a compositional bias: pro residues.

Its subcellular location is the nucleus speckle. In terms of biological role, member of the regulatory pathway controlling female somatic sexual differentiation, regulated by Sxl. Activates dsx female-specific splicing by promoting the formation of a splicing enhancer complex which consists of tra, tra2 and sr proteins. Together with tra-2, plays a role in switching fru splicing from the male-specific pattern to the female-specific pattern through activation of the female-specific fru 5'-splice site. No known function in males. In Drosophila melanogaster (Fruit fly), this protein is Female-specific protein transformer (tra).